The primary structure comprises 760 residues: U-box domain-containing protein 3 (760 aa).

The stretch at 146 to 217 forms a coiled coil; sequence LMELMENALR…EQTEQLIELV (72 aa). The 75-residue stretch at 237-311 folds into the U-box domain; sequence SIPPYFRCPL…ASWLEANRIN (75 aa). The segment covering 424 to 434 has biased composition (polar residues); the sequence is ILGNHQSSSEM. The interval 424–448 is disordered; the sequence is ILGNHQSSSEMSPKKNLESSNNVNH. ARM repeat units follow at residues 504–543, 545–584, 586–626, 628–666, and 668–707; these read IENR…NLSI, ELNK…SLSV, QVNR…NLSI, HDNK…NLSA, and GEGR…QLCL.

It carries out the reaction S-ubiquitinyl-[E2 ubiquitin-conjugating enzyme]-L-cysteine + [acceptor protein]-L-lysine = [E2 ubiquitin-conjugating enzyme]-L-cysteine + N(6)-ubiquitinyl-[acceptor protein]-L-lysine.. The protein operates within protein modification; protein ubiquitination. Its function is as follows. Functions as an E3 ubiquitin ligase. The sequence is that of U-box domain-containing protein 3 (PUB3) from Arabidopsis thaliana (Mouse-ear cress).